We begin with the raw amino-acid sequence, 294 residues long: Acetylglutamate kinase (294 aa).

Substrate contacts are provided by residues 67-68 (GG), R89, and N191.

This sequence belongs to the acetylglutamate kinase family. ArgB subfamily.

It localises to the cytoplasm. The enzyme catalyses N-acetyl-L-glutamate + ATP = N-acetyl-L-glutamyl 5-phosphate + ADP. It participates in amino-acid biosynthesis; L-arginine biosynthesis; N(2)-acetyl-L-ornithine from L-glutamate: step 2/4. Catalyzes the ATP-dependent phosphorylation of N-acetyl-L-glutamate. This chain is Acetylglutamate kinase, found in Methylobacillus flagellatus (strain ATCC 51484 / DSM 6875 / VKM B-1610 / KT).